A 266-amino-acid polypeptide reads, in one-letter code: Protein STAY-GREEN homolog, chloroplastic (266 aa).

A chloroplast-targeting transit peptide spans 1–50 (MGTLTASLVAPSKLNPEKHSSLFVYKTRRKSHKNQSIVPVARLFGPAIFE).

This sequence belongs to the staygreen family.

The protein localises to the plastid. It localises to the chloroplast. Its function is as follows. Required to trigger chlorophyll degradation during leaf senescence and fruit ripening. The protein is Protein STAY-GREEN homolog, chloroplastic of Capsicum annuum (Capsicum pepper).